The chain runs to 187 residues: Holliday junction resolvase (187 aa).

The protein belongs to the RuvC family. Poxviruses-type subfamily. Mg(2+) serves as cofactor. Post-translationally, acylated by palmitic acid group(s).

It localises to the membrane. Its function is as follows. Nuclease that specifically cleaves and resolves four-way DNA Holliday junctions into linear duplex products. The sequence is that of Holliday junction resolvase from Vaccinia virus (strain Ankara) (VACV).